Here is an 805-residue protein sequence, read N- to C-terminus: Leucine--tRNA ligase (805 aa).

Positions 40–51 match the 'HIGH' region motif; that stretch reads PYPSGQGLHVGH. Residues 577-581 carry the 'KMSKS' region motif; sequence KMSKS. ATP is bound at residue Lys580.

It belongs to the class-I aminoacyl-tRNA synthetase family.

It localises to the cytoplasm. It carries out the reaction tRNA(Leu) + L-leucine + ATP = L-leucyl-tRNA(Leu) + AMP + diphosphate. The chain is Leucine--tRNA ligase from Pediococcus pentosaceus (strain ATCC 25745 / CCUG 21536 / LMG 10740 / 183-1w).